A 164-amino-acid chain; its full sequence is ATP synthase subunit b 2 (164 aa).

A helical membrane pass occupies residues T4–P24.

Belongs to the ATPase B chain family. As to quaternary structure, F-type ATPases have 2 components, F(1) - the catalytic core - and F(0) - the membrane proton channel. F(1) has five subunits: alpha(3), beta(3), gamma(1), delta(1), epsilon(1). F(0) has three main subunits: a(1), b(2) and c(10-14). The alpha and beta chains form an alternating ring which encloses part of the gamma chain. F(1) is attached to F(0) by a central stalk formed by the gamma and epsilon chains, while a peripheral stalk is formed by the delta and b chains.

It is found in the cell inner membrane. Its function is as follows. F(1)F(0) ATP synthase produces ATP from ADP in the presence of a proton or sodium gradient. F-type ATPases consist of two structural domains, F(1) containing the extramembraneous catalytic core and F(0) containing the membrane proton channel, linked together by a central stalk and a peripheral stalk. During catalysis, ATP synthesis in the catalytic domain of F(1) is coupled via a rotary mechanism of the central stalk subunits to proton translocation. Component of the F(0) channel, it forms part of the peripheral stalk, linking F(1) to F(0). The sequence is that of ATP synthase subunit b 2 from Bartonella tribocorum (strain CIP 105476 / IBS 506).